The primary structure comprises 395 residues: Gastric triacylglycerol lipase (395 aa).

Positions 1 to 18 (MWLLLVTSVLSAFGGAHG) are cleaved as a signal peptide. N-linked (GlcNAc...) asparagine glycosylation is present at N33. In terms of domain architecture, AB hydrolase-1 spans 81–376 (LQHGLIASAT…LPYNHLDFIW (296 aa)). S171 acts as the Nucleophile in catalysis. A disulfide bond links C245 and C254. N-linked (GlcNAc...) asparagine glycosylation occurs at N270. Active-site charge relay system residues include D342 and H371.

Belongs to the AB hydrolase superfamily. Lipase family.

The protein localises to the secreted. The catalysed reaction is a triacylglycerol + H2O = a diacylglycerol + a fatty acid + H(+). It carries out the reaction 1,2,3-tri-(9Z-octadecenoyl)-glycerol + H2O = 1,2-di-(9Z-octadecenoyl)-sn-glycerol + (9Z)-octadecenoate + H(+). It catalyses the reaction 1,2,3-trioctanoylglycerol + H2O = 1,2-dioctanoyl-sn-glycerol + octanoate + H(+). Functionally, catalyzes the hydrolysis of triacylglycerols to yield free fatty acids, diacylglycerol, monoacylglycerol, and glycerol. Shows a preferential hydrolysis at the sn-3 position of triacylglycerol. The protein is Gastric triacylglycerol lipase (Lipf) of Mus musculus (Mouse).